A 512-amino-acid polypeptide reads, in one-letter code: Gustatory and odorant receptor 63a (512 aa).

The segment at 1–24 (MRPSGEKVVKGHGQGNSGHSLSGM) is disordered. Residues 1–129 (MRPSGEKVVK…PARAKFEMNS (129 aa)) are Cytoplasmic-facing. The helical transmembrane segment at 130–150 (ASFIYSVVFFVLLACYVGYVA) threads the bilayer. Topologically, residues 151 to 166 (NNRIHIVRSLSGPFEE) are extracellular. Residues 167-187 (AVIAYLFLVNILPIMIIPILW) traverse the membrane as a helical segment. The Cytoplasmic portion of the chain corresponds to 188–222 (YEARKIAKLFNDWDDFEVLYYQISGHSLPLKLRQK). Residues 223–243 (AVYIAIVLPILSVLSVVITHV) traverse the membrane as a helical segment. At 244-265 (TMSDLNINQVVPYCILDNLTAM) the chain is on the extracellular side. Asn261 carries N-linked (GlcNAc...) asparagine glycosylation. Residues 266–285 (LGAWWFLICEAMSITAHLLA) traverse the membrane as a helical segment. Over 286-324 (ERFQKALKHIGPAAMVADYRVLWLRLSKLTRDTGNALCY) the chain is Cytoplasmic. A helical membrane pass occupies residues 325-345 (TFVFMSLYLFFIITLSIYGLM). At 346–350 (SQLSE) the chain is on the extracellular side. A helical membrane pass occupies residues 351 to 371 (GFGIKDIGLTITALWNIGLLF). Residues 372 to 436 (YICDEAHYAS…FFDVNRTLFK (65 aa)) lie on the Cytoplasmic side of the membrane. A helical membrane pass occupies residues 437-457 (GLLTTMVTYLVVLLQFQISIP). Topologically, residues 458-512 (TDKGDSEGANNITVVDFVMDSLDNDMSLMGASTLSTTTVGTTLPPPIMKLKGRKG) are extracellular. A glycan (N-linked (GlcNAc...) asparagine) is linked at Asn468.

It belongs to the insect chemoreceptor superfamily. Gustatory receptor (GR) family. Gr21a subfamily. As to quaternary structure, gr21a and Gr63a probably form a heterodimer that responds to CO(2). In terms of tissue distribution, expressed in the medial aspect of the third antennal segment. Carbon dioxide-responsive neurons coexpress Gr21a and Gr63a in a pair of chemosensory receptors at both larval and adult life stages.

It is found in the cell membrane. Gustatory and odorant receptor which mediates acceptance or avoidance behavior, depending on its substrates. Gr21a and Gr63a together are sufficient for carbon dioxide detection and avoidance behavior. It is possible that the CO(2) receptors Gr63a and Gr21a activate the TRPC channels through Galpha49B and Plc21C. This innate olfactory avoidance behavior can be inhibited by inhibitory interactions of the odors such as 1-hexanol and 2,3-butanedione with Gr21a and Gr63a. The sequence is that of Gustatory and odorant receptor 63a (Gr63a) from Drosophila melanogaster (Fruit fly).